Consider the following 690-residue polypeptide: Signal peptide peptidase-like 2C (690 aa).

The signal sequence occupies residues 1–28 (MACLGSLHPLGSLLLLFLLLLLSPEARG). Topologically, residues 29-192 (EYGLVRVVSK…APLEPVTDYN (164 aa)) are lumenal. One can recognise a PA domain in the interval 87–166 (DSSPRQRPLH…AVLRYTDMLD (80 aa)). Asn-106 carries an N-linked (GlcNAc...) asparagine glycan. The helical transmembrane segment at 193-213 (MAIIFILAVGTVAAGGYWAGL) threads the bilayer. Residues 214-260 (MEANKLQRRQAQRGGGLGGHNQQQTVAAERSQRAWEDDDFEDAPMDF) are Cytoplasmic-facing. The chain crosses the membrane as a helical span at residues 261–283 (TPAMTGAVVTMSCSIMILLYFFY). Asp-284 is a topological domain (lumenal). A helical membrane pass occupies residues 285 to 307 (CFVYVMIGIFSLGASTGLYSCLA). At 308–328 (PILCHLPLWRYQWVLPGQRVS) the chain is on the cytoplasmic side. A helical membrane pass occupies residues 329–349 (VTWPLLLLAGLCAMVTVLWVI). Residues 350–354 (HRNED) lie on the Lumenal side of the membrane. The chain crosses the membrane as a helical span at residues 355–373 (HWAWLLQDTLGVAYCLFVL). The Cytoplasmic portion of the chain corresponds to 374-384 (RRVRLPTFKNC). The chain crosses the membrane as a helical span at residues 385-405 (TLFLLALLAFDVFFVFITPLF). Asp-395 is an active-site residue. The Lumenal segment spans residues 406-448 (TKTGESIMVEVASGPADSSSHERLPMVLKVPRLSFSALTLCNQ). The helical transmembrane segment at 449–469 (PFSILGFGDIVVPGFLVAYCH) threads the bilayer. Asp-457 is an active-site residue. Residues 470 to 482 (RFDMQVQSRQVYY) are Cytoplasmic-facing. Residues 483–503 (MACTVAYAVGLLVTFVAMILM) form a helical membrane-spanning segment. Residue Gln-504 is a topological domain, lumenal. A helical membrane pass occupies residues 505 to 525 (MGQPALLYLVSSTLLTSLAVA). The PAL signature appears at 508–510 (PAL). Over 526–690 (TCRQEFTLFW…KKSMSAQAPL (165 aa)) the chain is Cytoplasmic. A compositionally biased stretch (basic and acidic residues) spans 564–573 (EDAKDSRTTN). Residues 564–633 (EDAKDSRTTN…DPNELPSGSP (70 aa)) are disordered. The segment covering 615–624 (SEGWSDTNLD) has biased composition (polar residues).

Belongs to the peptidase A22B family. Interacts (via active sites) with FREY; the interaction stabilizes FREY1 protein and inhibits SPPL2C proteolytic activity. Glycosylated. Highly expressed in testis where it is primarily localised in spermatids (at protein level).

The protein resides in the endoplasmic reticulum membrane. Functionally, sperm-specific intramembrane-cleaving aspartic protease (I-CLiP) that cleaves distinct tail-anchored proteins and SNARE proteins. In elongated spermatids, modulates intracellular Ca(2+) homeostasis by controlling PLN abundance through proteolytic cleavage. During spermatogenesis, processes SNARE proteins and impacts vesicular trafficking which supports compartmental reorganization in maturating spermatids and may play a role in formation of the acrosome. In terms of biological role, in round spermatids, acts as a scaffold protein supporting FREY1 in IZUMO1 recruitment at the endoplasmic reticulum membrane and coordination of IZUMO1 complex assembly. Stabilizes FREY1 at the endoplasmic reticulum membrane through interaction. May recruit IZUMO1 interaction partners. Its function is as follows. No difference in cleavage specificity compared to isoform 1. This Mus musculus (Mouse) protein is Signal peptide peptidase-like 2C.